The primary structure comprises 302 residues: Cyclopropane mycolic acid synthase 2 (302 aa).

Residues 41–42, 76–84, 102–107, and 131–132 contribute to the S-adenosyl-L-methionine site; these read YS, LLDIGCGWG, TLSENQ, and WE. Residue Cys284 is part of the active site.

The protein belongs to the CFA/CMAS family. In terms of assembly, homodimer.

The protein localises to the cytoplasm. It catalyses the reaction a 1-acyl-2-(9Z)-enoyl-sn-glycero-3-phospholipid + S-adenosyl-L-methionine = a 1-acyl-2-(9-cyclopronane)-acyl-sn-glycero-3-phospholipid + S-adenosyl-L-homocysteine + H(+). Its pathway is lipid metabolism; mycolic acid biosynthesis. In terms of biological role, catalyzes the formation of trans cyclopropanated ketomycolate or methoxymycolate through the conversion of a double bond to a cyclopropane ring at the proximal position of an oxygenated mycolic acid via the transfer of a methylene group from S-adenosyl-L-methionine. In the absence of MmaA2, CmaA2 has a non-specific cis-cyclopropanating activity and is able to catalyze the conversion of a double bond to a cis cyclopropane ring at the distal position of an alpha mycolic acid. Cyclopropanated mycolic acids are key factors participating in cell envelope permeability, host immunomodulation and persistence. In Mycobacterium bovis (strain ATCC BAA-935 / AF2122/97), this protein is Cyclopropane mycolic acid synthase 2 (cmaA2).